We begin with the raw amino-acid sequence, 129 residues long: Glycine cleavage system H protein (129 aa).

Residues glutamate 24–lysine 106 enclose the Lipoyl-binding domain. The residue at position 65 (lysine 65) is an N6-lipoyllysine.

Belongs to the GcvH family. In terms of assembly, the glycine cleavage system is composed of four proteins: P, T, L and H. The cofactor is (R)-lipoate.

In terms of biological role, the glycine cleavage system catalyzes the degradation of glycine. The H protein shuttles the methylamine group of glycine from the P protein to the T protein. The sequence is that of Glycine cleavage system H protein from Aeromonas hydrophila subsp. hydrophila (strain ATCC 7966 / DSM 30187 / BCRC 13018 / CCUG 14551 / JCM 1027 / KCTC 2358 / NCIMB 9240 / NCTC 8049).